A 295-amino-acid polypeptide reads, in one-letter code: MDPMITGLGVVALMGAAATIAGAAEDLESDVGSQSNPNSQVQLAPQMGHLHRIINKAVSGEPVAYGTWCGIAGSVAFVLMNSMQLPVIMAIAIGAVIAAMVHTTYAVTSHMGRIVSQSQFNQPLFMDMLVQHLGPIAGHGFIVTFCTVGLSYLMTLPIPGFAHPFPLPLLAVLWGITIGAIGSSTGDVHYGAEREYQQYPFGGGIPVAIHGDITTKAELGARNSMDVVHFCAKYGGPLTGFAFGAIVFLSFWNTIVFGITGGIISGLIIVLLLIILNNRLEVFARNRYGPYKEEE.

A run of 7 helical transmembrane segments spans residues 4 to 24 (MITG…AGAA), 60 to 80 (GEPV…FVLM), 87 to 107 (VIMA…TYAV), 140 to 160 (GFIV…PIPG), 161 to 181 (FAHP…IGAI), 234 to 254 (YGGP…FWNT), and 255 to 275 (IVFG…LLII).

Belongs to the MtrE family. The complex is composed of 8 subunits; MtrA, MtrB, MtrC, MtrD, MtrE, MtrF, MtrG and MtrH.

The protein localises to the cell membrane. The enzyme catalyses 5-methyl-5,6,7,8-tetrahydromethanopterin + coenzyme M + 2 Na(+)(in) = 5,6,7,8-tetrahydromethanopterin + methyl-coenzyme M + 2 Na(+)(out). Its pathway is one-carbon metabolism; methanogenesis from CO(2); methyl-coenzyme M from 5,10-methylene-5,6,7,8-tetrahydromethanopterin: step 2/2. Its function is as follows. Part of a complex that catalyzes the formation of methyl-coenzyme M and tetrahydromethanopterin from coenzyme M and methyl-tetrahydromethanopterin. This is an energy-conserving, sodium-ion translocating step. This Methanothermobacter marburgensis (strain ATCC BAA-927 / DSM 2133 / JCM 14651 / NBRC 100331 / OCM 82 / Marburg) (Methanobacterium thermoautotrophicum) protein is Tetrahydromethanopterin S-methyltransferase subunit E.